Consider the following 181-residue polypeptide: uncharacterized protein (181 aa).

The 178-residue stretch at 1–178 (MVVAYKLSNG…VFKKVFDNSL (178 aa)) folds into the Macro domain.

This is an uncharacterized protein from Sulfolobus acidocaldarius (strain ATCC 33909 / DSM 639 / JCM 8929 / NBRC 15157 / NCIMB 11770).